The chain runs to 206 residues: Small ribosomal subunit protein uS4 (206 aa).

Positions 15-46 are disordered; the sequence is MGENIWGRPKSPVNKREYGPGQHGQRRKNKLS. An S4 RNA-binding domain is found at 94-154; the sequence is RRLDAIVYRA…EKSRQLALVL (61 aa).

It belongs to the universal ribosomal protein uS4 family. In terms of assembly, part of the 30S ribosomal subunit. Contacts protein S5. The interaction surface between S4 and S5 is involved in control of translational fidelity.

One of the primary rRNA binding proteins, it binds directly to 16S rRNA where it nucleates assembly of the body of the 30S subunit. Its function is as follows. With S5 and S12 plays an important role in translational accuracy. This Cereibacter sphaeroides (strain ATCC 17029 / ATH 2.4.9) (Rhodobacter sphaeroides) protein is Small ribosomal subunit protein uS4.